The primary structure comprises 251 residues: UPF0309 protein SCO4393 (251 aa).

Residues 36-220 enclose the SIS domain; the sequence is LADTVQNGGR…AATLADRGIE (185 aa).

It belongs to the UPF0309 family.

This Streptomyces coelicolor (strain ATCC BAA-471 / A3(2) / M145) protein is UPF0309 protein SCO4393.